The following is a 685-amino-acid chain: Glycine--tRNA ligase beta subunit (685 aa).

The protein belongs to the class-II aminoacyl-tRNA synthetase family. As to quaternary structure, tetramer of two alpha and two beta subunits.

It is found in the cytoplasm. It carries out the reaction tRNA(Gly) + glycine + ATP = glycyl-tRNA(Gly) + AMP + diphosphate. This Leuconostoc mesenteroides subsp. mesenteroides (strain ATCC 8293 / DSM 20343 / BCRC 11652 / CCM 1803 / JCM 6124 / NCDO 523 / NBRC 100496 / NCIMB 8023 / NCTC 12954 / NRRL B-1118 / 37Y) protein is Glycine--tRNA ligase beta subunit.